The sequence spans 475 residues: TOM1-like protein 1 (475 aa).

The 133-residue stretch at 22-154 folds into the VHS domain; that stretch reads ATFAGVQTED…DLLKKGVQFP (133 aa). Positions 155–175 are disordered; that stretch reads PLDGEPETKQEAGQISPSRPT. Over residues 165–175 the composition is skewed to polar residues; sequence EAGQISPSRPT. Residue Ser170 is modified to Phosphoserine. In terms of domain architecture, GAT spans 199–287; it reads EQIGKLHSEL…AILGYERFTR (89 aa). Positions 296-317 are disordered; sequence KRNPTEANQTSSEPSAPSCDLL. The span at 300–310 shows a compositional bias: polar residues; the sequence is TEANQTSSEPS. A Phosphoserine modification is found at Ser313. Residues 392-395 form an interaction with GRB2 region; that stretch reads YDNF. Positions 421–425 match the SH3-binding motif; sequence LPPLP. The tract at residues 442 to 445 is interaction with PIK3R1; it reads YEVM. Phosphotyrosine is present on Tyr458. Positions 458–461 match the SH2-binding motif; that stretch reads YEEI.

Belongs to the TOM1 family. As to quaternary structure, interacts with the SH2 and SH3 domains of FYN when phosphorylated. Also interacts with GRB2 and PIK3R1 when phosphorylated. Interacts with LYN. Phosphorylated on tyrosines by FYN and LYN.

The protein localises to the golgi apparatus. Its subcellular location is the golgi stack. The protein resides in the endosome membrane. It is found in the cytoplasm. It localises to the membrane. Functionally, probable adapter protein involved in signaling pathways. Interacts with the SH2 and SH3 domains of various signaling proteins when it is phosphorylated. May promote FYN activation, possibly by disrupting intramolecular SH3-dependent interactions. In Rattus norvegicus (Rat), this protein is TOM1-like protein 1 (Tom1l1).